The chain runs to 195 residues: UPF0215 protein TGAM_0348 (195 aa).

The protein belongs to the UPF0215 family.

The polypeptide is UPF0215 protein TGAM_0348 (Thermococcus gammatolerans (strain DSM 15229 / JCM 11827 / EJ3)).